We begin with the raw amino-acid sequence, 701 residues long: Elongation factor G (701 aa).

The 283-residue stretch at glutamate 8 to threonine 290 folds into the tr-type G domain. GTP-binding positions include alanine 17 to threonine 24, aspartate 88 to histidine 92, and asparagine 142 to aspartate 145.

The protein belongs to the TRAFAC class translation factor GTPase superfamily. Classic translation factor GTPase family. EF-G/EF-2 subfamily.

The protein resides in the cytoplasm. Its function is as follows. Catalyzes the GTP-dependent ribosomal translocation step during translation elongation. During this step, the ribosome changes from the pre-translocational (PRE) to the post-translocational (POST) state as the newly formed A-site-bound peptidyl-tRNA and P-site-bound deacylated tRNA move to the P and E sites, respectively. Catalyzes the coordinated movement of the two tRNA molecules, the mRNA and conformational changes in the ribosome. This chain is Elongation factor G, found in Aeromonas hydrophila subsp. hydrophila (strain ATCC 7966 / DSM 30187 / BCRC 13018 / CCUG 14551 / JCM 1027 / KCTC 2358 / NCIMB 9240 / NCTC 8049).